A 61-amino-acid chain; its full sequence is MAVQQNRKSRSRRDMRRSHDALTENALTVDQATGETHRRHHVTKDGFYRGRQLFAKAADAE.

The disordered stretch occupies residues 1–44; that stretch reads MAVQQNRKSRSRRDMRRSHDALTENALTVDQATGETHRRHHVTK. Over residues 7 to 16 the composition is skewed to basic residues; the sequence is RKSRSRRDMR. Residues 25–34 are compositionally biased toward polar residues; the sequence is NALTVDQATG.

It belongs to the bacterial ribosomal protein bL32 family.

In Acinetobacter baumannii (strain AB307-0294), this protein is Large ribosomal subunit protein bL32.